A 758-amino-acid polypeptide reads, in one-letter code: Inhibitor of nuclear factor kappa-B kinase subunit alpha (758 aa).

Residues 15–301 enclose the Protein kinase domain; that stretch reads WVMKERLGTG…LNTDSKQPQC (287 aa). ATP contacts are provided by residues 21–29 and Lys44; that span reads LGTGGFGHV. Asp145 acts as the Proton acceptor in catalysis. The interval 456–477 is leucine-zipper; it reads LLRFNTNLTRYKNMMFSFSQQL. The segment at 741 to 746 is NEMO-binding; the sequence is QDWSWT.

Belongs to the protein kinase superfamily. Ser/Thr protein kinase family. I-kappa-B kinase subfamily. In terms of assembly, directly interacts with ikbkg/nemo.

It localises to the cytoplasm. Its subcellular location is the nucleus. The catalysed reaction is L-seryl-[I-kappa-B protein] + ATP = O-phospho-L-seryl-[I-kappa-B protein] + ADP + H(+). Activated when phosphorylated and inactivated when dephosphorylated. In terms of biological role, phosphorylates inhibitors of NF-kappa-B thus leading to the dissociation of the inhibitor/NF-kappa-B complex and ultimately the degradation of the inhibitor. Phosphorylates 'Ser-10' of histone H3 at NF-kappa-B-regulated promoters during inflammatory responses triggered by cytokines. This is Inhibitor of nuclear factor kappa-B kinase subunit alpha (chuk) from Danio rerio (Zebrafish).